The primary structure comprises 260 residues: Putative hydro-lyase Bmul_5125/BMULJ_03391 (260 aa).

It belongs to the D-glutamate cyclase family.

This chain is Putative hydro-lyase Bmul_5125/BMULJ_03391, found in Burkholderia multivorans (strain ATCC 17616 / 249).